Reading from the N-terminus, the 191-residue chain is MAIHLTRIYTRTGDNGTTGLSDFSRVAKTDLRLVAYADCDETNSAIGVALALGNPDQKITDVLQQIQNDLFDAGADLSTPMQDSVRNPEYPQLRITQTHIDRLEEWCDTYNTPLPTLNSFVLPGGSPLSALLHVARTVARRAERSAWAAVEAHPGVVSMLPAKYLNRLSDLLFILSRVANTGNDVLWRPGG.

Residues 10 to 18, Lys-28, 140 to 145, and Asn-166 contribute to the ATP site; these read TRTGDNGTT and RRAERS.

It belongs to the Cob(I)alamin adenosyltransferase family.

It is found in the cytoplasm. The catalysed reaction is 2 cob(II)yrinate a,c diamide + reduced [electron-transfer flavoprotein] + 2 ATP = 2 adenosylcob(III)yrinate a,c-diamide + 2 triphosphate + oxidized [electron-transfer flavoprotein] + 3 H(+). The enzyme catalyses 2 cob(II)alamin + reduced [electron-transfer flavoprotein] + 2 ATP = 2 adenosylcob(III)alamin + 2 triphosphate + oxidized [electron-transfer flavoprotein] + 3 H(+). It functions in the pathway cofactor biosynthesis; adenosylcobalamin biosynthesis; adenosylcobalamin from cob(II)yrinate a,c-diamide: step 2/7. This is Corrinoid adenosyltransferase from Mycobacterium leprae (strain TN).